The sequence spans 264 residues: Phosphate import ATP-binding protein PstB (264 aa).

In terms of domain architecture, ABC transporter spans 11 to 250 (LKAEALSVYY…DTTEKIFDSP (240 aa)). Residue 43 to 50 (GPSGCGKS) coordinates ATP.

Belongs to the ABC transporter superfamily. Phosphate importer (TC 3.A.1.7) family. The complex is composed of two ATP-binding proteins (PstB), two transmembrane proteins (PstC and PstA) and a solute-binding protein (PstS).

The protein localises to the cell inner membrane. It catalyses the reaction phosphate(out) + ATP + H2O = ADP + 2 phosphate(in) + H(+). In terms of biological role, part of the ABC transporter complex PstSACB involved in phosphate import. Responsible for energy coupling to the transport system. The sequence is that of Phosphate import ATP-binding protein PstB from Synechococcus sp. (strain ATCC 27144 / PCC 6301 / SAUG 1402/1) (Anacystis nidulans).